Here is a 261-residue protein sequence, read N- to C-terminus: Succinate dehydrogenase iron-sulfur subunit (261 aa).

The 92-residue stretch at 28–119 (RKVKVYRYDP…DIKIYPLPHM (92 aa)) folds into the 2Fe-2S ferredoxin-type domain. Positions 80, 85, and 100 each coordinate [2Fe-2S] cluster. Residues 161–191 (DREKLDGLYECILCACCSTSCPSYWWNGDKY) form the 4Fe-4S ferredoxin-type domain. Residues Cys171, Cys174, and Cys177 each coordinate [4Fe-4S] cluster. Cys181 is a [3Fe-4S] cluster binding site. An a ubiquinone-binding site is contributed by Trp186. The [3Fe-4S] cluster site is built by Cys228 and Cys234. Cys238 is a [4Fe-4S] cluster binding site.

It belongs to the succinate dehydrogenase/fumarate reductase iron-sulfur protein family. In terms of assembly, part of an enzyme complex containing four subunits: a flavoprotein, an iron-sulfur, cytochrome b-556, and a hydrophobic anchor protein. The cofactor is [2Fe-2S] cluster. It depends on [3Fe-4S] cluster as a cofactor. [4Fe-4S] cluster is required as a cofactor.

It catalyses the reaction a quinone + succinate = fumarate + a quinol. It participates in carbohydrate metabolism; tricarboxylic acid cycle; fumarate from succinate (bacterial route): step 1/1. This chain is Succinate dehydrogenase iron-sulfur subunit (sdhB), found in Rickettsia prowazekii (strain Madrid E).